The sequence spans 222 residues: uncharacterized protein (222 aa).

The next 7 helical transmembrane spans lie at 26–46 (YGLLALTLAFSGLVAYVSQQM), 48–68 (LPYPNVFVVLIGFYGLFFLTV), 75–95 (WGLVSTFALTGFMGYTLGPIL), 107–127 (VITSAFAMTALVFFGLSAYVL), 139–159 (FITAGFFVLLGAVLVSLFFQI), 166–186 (ISAGFVLFSSAMILYQTSAII), and 198–218 (ISLYVSIYNLFISLLQIFGIA).

The protein belongs to the BI1 family.

Its subcellular location is the cell membrane. This is an uncharacterized protein from Pseudomonas aeruginosa (strain ATCC 15692 / DSM 22644 / CIP 104116 / JCM 14847 / LMG 12228 / 1C / PRS 101 / PAO1).